The sequence spans 273 residues: Trypsin-6 (273 aa).

The N-terminal stretch at 1-22 (MLSKFTAILLAVHIALFACALT) is a signal peptide. A propeptide spans 23-46 (QAEKRHKLTRPAFHPNAPYLAGKR) (activation peptide). The Peptidase S1 domain occupies 47–272 (IVGGFVIDIS…VRDWIRETSG (226 aa)). Cysteine 72 and cysteine 88 form a disulfide bridge. Active-site charge relay system residues include histidine 87 and aspartate 132. 2 cysteine pairs are disulfide-bonded: cysteine 197-cysteine 213 and cysteine 224-cysteine 248. Catalysis depends on serine 228, which acts as the Charge relay system.

This sequence belongs to the peptidase S1 family. Expressed in the midgut. Expression levels drop a few hours after blood feeding and pick up again 28 hours later.

It is found in the secreted. The enzyme catalyses Preferential cleavage: Arg-|-Xaa, Lys-|-Xaa.. Functionally, constitutive trypsin that is expressed 2 days after emergence, coinciding with host seeking behavior of the female. The sequence is that of Trypsin-6 (TRYP6) from Anopheles gambiae (African malaria mosquito).